We begin with the raw amino-acid sequence, 346 residues long: Biotin synthase (346 aa).

Residues 38-256 enclose the Radical SAM core domain; it reads QQVQVSTLLS…IAVARIMMPT (219 aa). Cys53, Cys57, and Cys60 together coordinate [4Fe-4S] cluster. Positions 97, 128, 188, and 260 each coordinate [2Fe-2S] cluster.

The protein belongs to the radical SAM superfamily. Biotin synthase family. As to quaternary structure, homodimer. The cofactor is [4Fe-4S] cluster. [2Fe-2S] cluster serves as cofactor.

It carries out the reaction (4R,5S)-dethiobiotin + (sulfur carrier)-SH + 2 reduced [2Fe-2S]-[ferredoxin] + 2 S-adenosyl-L-methionine = (sulfur carrier)-H + biotin + 2 5'-deoxyadenosine + 2 L-methionine + 2 oxidized [2Fe-2S]-[ferredoxin]. The protein operates within cofactor biosynthesis; biotin biosynthesis; biotin from 7,8-diaminononanoate: step 2/2. Functionally, catalyzes the conversion of dethiobiotin (DTB) to biotin by the insertion of a sulfur atom into dethiobiotin via a radical-based mechanism. This is Biotin synthase from Salmonella choleraesuis (strain SC-B67).